A 299-amino-acid polypeptide reads, in one-letter code: MSKHDVERLPAACGLTCPQRLGQYWQLVRGDRPIGSLLLLWPTWWALWLAADGLPPLWTLFVFTAGVWLTRSAGCVINDYADRWLDPHVERTKSRPLATGAVSGREALWVFVVLMLVAFALVFTLNWLTVLLSVPGVFLAASYPYLKRHTHLPQVYLGMAFGWGIPMAFAAVQGSVPVLGWLLYAANILWATAYDTWYAMVDRDDDIRMGSKSTAILFGRFDLVAQGILYALMFAVLALVDLRADLGAAYWAGLGVAALLVAYEFRIARHRERGPCFRAFLHNNWVGLAIFVGIAVAGR.

Helical transmembrane passes span Ile-34–Leu-54, Leu-57–Ile-77, Leu-108–Leu-128, Trp-163–Leu-183, Phe-221–Asp-241, Asp-245–Phe-265, and Phe-277–Ala-297.

The protein belongs to the UbiA prenyltransferase family. Mg(2+) serves as cofactor.

It localises to the cell inner membrane. The enzyme catalyses all-trans-octaprenyl diphosphate + 4-hydroxybenzoate = 4-hydroxy-3-(all-trans-octaprenyl)benzoate + diphosphate. It functions in the pathway cofactor biosynthesis; ubiquinone biosynthesis. Functionally, catalyzes the prenylation of para-hydroxybenzoate (PHB) with an all-trans polyprenyl group. Mediates the second step in the final reaction sequence of ubiquinone-8 (UQ-8) biosynthesis, which is the condensation of the polyisoprenoid side chain with PHB, generating the first membrane-bound Q intermediate 3-octaprenyl-4-hydroxybenzoate. The polypeptide is 4-hydroxybenzoate octaprenyltransferase (Xanthomonas oryzae pv. oryzae (strain MAFF 311018)).